The sequence spans 62 residues: Large ribosomal subunit protein uL30 (62 aa).

Belongs to the universal ribosomal protein uL30 family. In terms of assembly, part of the 50S ribosomal subunit.

This chain is Large ribosomal subunit protein uL30, found in Pseudoalteromonas atlantica (strain T6c / ATCC BAA-1087).